The primary structure comprises 574 residues: MVIMEGFKIAMKVIDEIDKKIKPLIGWEKADEVVKIGADGTPTKRIDVIAENMAINILEKFSGGILISEEIGLKVVGDELEYIFILDPIDGTYNALKSIPIYSTSIAVAKIKGEDKKLIRENINNIDWIKSFIANKYTINDLYVGIVKNLATGDLYYAIKGEGSFLEKDGEKIKIETKNIKDLKEASVGLFVYGLSNDLLEFLKERKVRRVRLFGSMALEMCYVVSGALDAYINVNENSRLCDIAGAYVICREGNAIVTNKNGKPLNMKLHLMERTSLIVSNKYLHKKLIALFGNRWIIKPVKFGIVVREDKEEAINLAIEICKYLKDKNIPFCVEDFLRERVGGDKFDISAISHIIAIGGDGTILRASRLVNGETIPIIAVNMGKVGFLAEFCKDEVFEIIDKVIYGEYEIEKRSKLSCKIIKDNRVIKTPSALNEMVVITKNPAKILEFDVYVNDTLVENVRADGIIVSTPTGSTAYSLSAGGPIVEPNVDCFIISPICPFKLSSRPLVISASNRIKLKLKLEKPALLVIDGSVEYEINKDDELIFEKSDSYAYFVKGQSFYNKLSRCLGIK.

The interval 1–297 (MVIMEGFKIA…KLIALFGNRW (297 aa)) is NADP phosphatase. The Mg(2+) site is built by glutamate 69, aspartate 87, isoleucine 89, aspartate 90, and aspartate 243. An NAD kinase region spans residues 302–574 (VKFGIVVRED…NKLSRCLGIK (273 aa)). Aspartate 362 (proton acceptor) is an active-site residue. NAD(+) contacts are provided by residues 362-363 (DG), arginine 367, 436-437 (NE), lysine 447, arginine 464, aspartate 466, and 477-482 (TAYSLS).

The protein in the N-terminal section; belongs to the inositol monophosphatase superfamily. This sequence in the C-terminal section; belongs to the NAD kinase family. As to quaternary structure, homotetramer. It depends on Mg(2+) as a cofactor.

The protein resides in the cytoplasm. It catalyses the reaction NAD(+) + ATP = ADP + NADP(+) + H(+). The catalysed reaction is NADP(+) + H2O = phosphate + NAD(+). The enzyme catalyses UTP + NAD(+) = UDP + NADP(+) + H(+). It carries out the reaction 5-methyl-UTP + NAD(+) = 5-methyl-UDP + NADP(+) + H(+). It catalyses the reaction CTP + NAD(+) = CDP + NADP(+) + H(+). The catalysed reaction is GTP + NAD(+) = GDP + NADP(+) + H(+). The enzyme catalyses dATP + NAD(+) = dADP + NADP(+) + H(+). It carries out the reaction NADPH + H2O = phosphate + NADH. It catalyses the reaction adenosine 2'-phosphate + H2O = adenosine + phosphate. The catalysed reaction is beta-D-fructose 1,6-bisphosphate + H2O = beta-D-fructose 6-phosphate + phosphate. Phosphatase activity is slightly inhibited by ADP, NADH and ATP, and moderately inhibited by NAD and 5'-AMP. Kinase activity is slightly inhibited by ADP and NADP. Functionally, involved in the regulation of the intracellular balance between NAD(H) and NADP(H), and is a key enzyme in the biosynthesis of NADP. Catalyzes the phosphorylation and dephosphorylation of NAD and NADP, respectively. Although it shows conflicting dual activities and is able to supply NADP, it seems that its physiological role is to prevent excess accumulation of NADP. Kinase can use ATP and other nucleoside triphosphates (UTP, TTP, CTP, GTP) as well as inorganic polyphosphate (poly(P)) as phosphoryl donors, however poly(P) is not considered to be the physiological phosphoryl donor. NAD is the preferred substrate for the kinase, but NADH can also be used as phosphoryl acceptor. Phosphatase can use NADP or NADPH as phosphoryl donor, but NADP is the preferred substrate. Phosphatase also has an activity toward the terminal phosphate group at C-2 of adenosine in 2'-AMP and toward the phosphate group at C-1 of fructose 1,6-bisphosphate, but not toward inositol 1-phosphate. In Methanocaldococcus jannaschii (strain ATCC 43067 / DSM 2661 / JAL-1 / JCM 10045 / NBRC 100440) (Methanococcus jannaschii), this protein is Bifunctional NADP phosphatase/NAD kinase.